The chain runs to 159 residues: Late embryogenesis abundant protein 50 (159 aa).

SMP domains lie at 30–87 (TTLT…RNQK) and 96–151 (NLGD…YKLN).

Belongs to the LEA type SMP family.

Its subcellular location is the cytoplasm. It is found in the nucleus. LEA proteins are late embryonic proteins abundant in higher plant seed embryos. The function of those proteins is not known. This Arabidopsis thaliana (Mouse-ear cress) protein is Late embryogenesis abundant protein 50.